The sequence spans 409 residues: NADH-quinone oxidoreductase subunit D (409 aa).

The protein belongs to the complex I 49 kDa subunit family. As to quaternary structure, NDH-1 is composed of 14 different subunits. Subunits NuoB, C, D, E, F, and G constitute the peripheral sector of the complex.

The protein resides in the cell inner membrane. It catalyses the reaction a quinone + NADH + 5 H(+)(in) = a quinol + NAD(+) + 4 H(+)(out). NDH-1 shuttles electrons from NADH, via FMN and iron-sulfur (Fe-S) centers, to quinones in the respiratory chain. The immediate electron acceptor for the enzyme in this species is believed to be ubiquinone. Couples the redox reaction to proton translocation (for every two electrons transferred, four hydrogen ions are translocated across the cytoplasmic membrane), and thus conserves the redox energy in a proton gradient. In Sulfurovum sp. (strain NBC37-1), this protein is NADH-quinone oxidoreductase subunit D.